Reading from the N-terminus, the 259-residue chain is MSAEEQDTRSGGIQVIARAAELLRVLQAHPGGLSQAEIGERVGMARSTVSRILNALEDEGLVASRGARGPYRLGPEITRMATTVRLGVVTEMHPFLTELSRELDETVDLSILDGDRADVVDQVVPPQRLRAVSAVGESFPLYCCANGKALLAALPPERQARALPSRLAPLTANTITDRAALRDELNRIRVDGVAYDREEQTEGICAVGAVLRGVSVELVAVSVPVPAQRFYGREAELAGALLAWVSKVDAWFNGTEDRK.

One can recognise an HTH iclR-type domain in the interval 13–75 (IQVIARAAEL…GARGPYRLGP (63 aa)). A DNA-binding region (H-T-H motif) is located at residues 35–54 (QAEIGERVGMARSTVSRILN). The region spanning 88–259 (VVTEMHPFLT…AWFNGTEDRK (172 aa)) is the IclR-ED domain.

Homodimer.

Functionally, binds to the upstream region of Rv1714 and probably modulates the expression of the downstream gene(s). This Mycobacterium tuberculosis (strain ATCC 25618 / H37Rv) protein is HTH-type transcriptional regulator Rv1719.